We begin with the raw amino-acid sequence, 408 residues long: Probable pectate lyase 18 (408 aa).

The first 24 residues, Met1–Ser24, serve as a signal peptide directing secretion. Asn42 carries N-linked (GlcNAc...) asparagine glycosylation. Residues Asp206, Asp230, and Asp234 each contribute to the Ca(2+) site. Arg286 is an active-site residue.

It belongs to the polysaccharide lyase 1 family. Requires Ca(2+) as cofactor. Expressed in flowers, but not in leaves.

The catalysed reaction is Eliminative cleavage of (1-&gt;4)-alpha-D-galacturonan to give oligosaccharides with 4-deoxy-alpha-D-galact-4-enuronosyl groups at their non-reducing ends.. The protein operates within glycan metabolism; pectin degradation; 2-dehydro-3-deoxy-D-gluconate from pectin: step 2/5. This Arabidopsis thaliana (Mouse-ear cress) protein is Probable pectate lyase 18.